The primary structure comprises 249 residues: Probable transcriptional regulator ycf27 (249 aa).

A Response regulatory domain is found at 13–126; sequence HLLIVDDENN…ELEARIQSIL (114 aa). Residue Asp-62 is modified to 4-aspartylphosphate. The segment at residues 82–100 is a DNA-binding region (H-T-H motif); that stretch reads DIPIIMLTALEDVLDKVTG. A DNA-binding region (ompR/PhoB-type) is located at residues 142–246; that stretch reads INLFKTGSLN…ARGTGYLCRK (105 aa).

The protein localises to the plastid. It localises to the chloroplast. Probable promoter-specific protein mediating the interaction between DNA and RNA polymerase. In Cyanidium caldarium (Red alga), this protein is Probable transcriptional regulator ycf27 (ycf27).